We begin with the raw amino-acid sequence, 116 residues long: Large ribosomal subunit protein bL19 (116 aa).

This sequence belongs to the bacterial ribosomal protein bL19 family.

Its function is as follows. This protein is located at the 30S-50S ribosomal subunit interface and may play a role in the structure and function of the aminoacyl-tRNA binding site. This is Large ribosomal subunit protein bL19 from Syntrophomonas wolfei subsp. wolfei (strain DSM 2245B / Goettingen).